The following is a 34-amino-acid chain: Sperm protein EM1 (34 aa).

The segment covering 1 to 17 has biased composition (basic residues); sequence AGSKSRSRSRSRSRSKS. The tract at residues 1 to 34 is disordered; that stretch reads AGSKSRSRSRSRSRSKSPAKSASPKSAASPRASR. A run of 7 repeats spans residues 3-4, 5-6, 7-8, 9-10, 11-12, 13-14, and 15-16. Positions 3-16 are 7 X 2 AA tandem repeats of S-[KR]; the sequence is SKSRSRSRSRSRSK. Residues 18-34 show a composition bias toward low complexity; the sequence is PAKSASPKSAASPRASR.

As to expression, sperm.

It localises to the nucleus. The chain is Sperm protein EM1 from Ensis minor (Razor shell).